A 170-amino-acid chain; its full sequence is E1B protein, small T-antigen (170 aa).

The interval 137–170 is disordered; the sequence is PAQPPHGLDPVREEEEEEEEEENLRAGLDPQTEL. The segment covering 148–158 has biased composition (acidic residues); it reads REEEEEEEEEE.

Belongs to the adenoviridae E1B 19 kDa protein family.

Its subcellular location is the host cell membrane. It is found in the host nucleus envelope. It localises to the host nucleus lamina. Putative adenovirus Bcl-2 homolog that inhibits apoptosis induced by TNF or FAS pathways, as well as p53-mediated apoptosis. Without E1B 19K function, virus production is compromised because of premature death of host cell. Interacts with Bax protein in cell lysates. The chain is E1B protein, small T-antigen from Homo sapiens (Human).